The chain runs to 408 residues: Na(+)-translocating NADH-quinone reductase subunit F (408 aa).

A helical transmembrane segment spans residues 6–26 (IILGVVMFTAIVLALVAIILA). The region spanning 35–127 (GDVTIRINGE…DMDVEVPEEV (93 aa)) is the 2Fe-2S ferredoxin-type domain. Positions 70, 76, 79, and 111 each coordinate [2Fe-2S] cluster. An FAD-binding FR-type domain is found at 130 to 270 (VKAWECTVES…YGPFGEFFAK (141 aa)).

Belongs to the NqrF family. In terms of assembly, composed of six subunits; NqrA, NqrB, NqrC, NqrD, NqrE and NqrF. [2Fe-2S] cluster serves as cofactor. It depends on FAD as a cofactor.

The protein resides in the cell inner membrane. It carries out the reaction a ubiquinone + n Na(+)(in) + NADH + H(+) = a ubiquinol + n Na(+)(out) + NAD(+). Functionally, NQR complex catalyzes the reduction of ubiquinone-1 to ubiquinol by two successive reactions, coupled with the transport of Na(+) ions from the cytoplasm to the periplasm. The first step is catalyzed by NqrF, which accepts electrons from NADH and reduces ubiquinone-1 to ubisemiquinone by a one-electron transfer pathway. The chain is Na(+)-translocating NADH-quinone reductase subunit F from Marinomonas sp. (strain MWYL1).